The primary structure comprises 205 residues: DNA-directed RNA polymerase RPB5 homolog (205 aa).

Belongs to the archaeal RpoH/eukaryotic RPB5 RNA polymerase subunit family. Part of the viral DNA-directed RNA polymerase that consists of 8 polII-like subunits (RPB1, RPB2, RPB3, RPB5, RPB6, RPB7, RPB9, RPB10), a capping enzyme and a termination factor.

The protein resides in the host cytoplasm. It localises to the virion. In terms of biological role, component of the DNA-directed RNA polymerase (RNAP) that catalyzes the transcription in the cytoplasm of viral DNA into RNA using the four ribonucleoside triphosphates as substrates. The polypeptide is DNA-directed RNA polymerase RPB5 homolog (Ornithodoros (relapsing fever ticks)).